We begin with the raw amino-acid sequence, 400 residues long: F-box/LRR-repeat protein 14 (400 aa).

An F-box domain is found at 2–48 (ETHISCLFPELLAMIFGYLDVRDKGRAAQVCTAWRDAAYHKSVWRGV). The tract at residues 2 to 48 (ETHISCLFPELLAMIFGYLDVRDKGRAAQVCTAWRDAAYHKSVWRGV) is required for down-regulation of SNAI1. LRR repeat units lie at residues 144 to 163 (GLEVLELGGCSNITNTGLLL), 170 to 191 (RLKSLNLRSCRHLSDVGIGHLA), 203 to 225 (GLEQLTLQDCQKLTDLSLKHISR), 229 to 250 (GLRLLNLSFCGGISDAGLLHLS), and 254 to 275 (SLRSLNLRSCDNISDTGIMHLA).

In terms of assembly, part of a SCF (SKP1-cullin-F-box) ubiquitin-protein ligase complex. Interacts with SKP1 and CUL1. Interacts with SNAI1; the interaction requires the phosphorylation of the two serine residues in the substrate destruction motif D-S-G-X(2,3,4)-S.

Its subcellular location is the cytoplasm. Its function is as follows. Substrate-recognition component of some SCF (SKP1-CUL1-F-box protein)-type E3 ubiquitin-protein ligase complexes. The SCF(FBXL14) complex acts by mediating ubiquitination and subsequent degradation of SNAI1. The chain is F-box/LRR-repeat protein 14 (FBXL14) from Bos taurus (Bovine).